The sequence spans 875 residues: Phospholipase DDHD1 (875 aa).

Disordered stretches follow at residues 1 to 30, 101 to 153, and 206 to 231; these read MNYP…LGSD, LRYY…GAAA, and RAQD…SVED. Phosphoserine is present on residues S8 and S11. A compositionally biased stretch (gly residues) spans 130 to 140; sequence SGGGGAAGGGP. The segment covering 217 to 228 has biased composition (low complexity); sequence GPASPAGPASSS. S540 is an active-site residue. The DDHD domain maps to 614–861; it reads LKFKVENFFC…ALFLLTFMYK (248 aa). S726 bears the Phosphoserine mark. The disordered stretch occupies residues 770-804; that stretch reads RSSASQPSETSRDSIEDEKKPVASPPMTTVATQTL. Positions 779-790 are enriched in basic and acidic residues; sequence TSRDSIEDEKKP. The span at 795–804 shows a compositional bias: polar residues; it reads PMTTVATQTL.

Belongs to the PA-PLA1 family. Forms homooligomers and, to a much smaller extent, heterooligomers with DDHD2. Interacts with SEC23A and SEC24C. In terms of tissue distribution, expressed in mature testis.

It is found in the cytoplasm. The catalysed reaction is a 1,2-diacyl-sn-glycero-3-phosphate + H2O = a 2-acyl-sn-glycerol 3-phosphate + a fatty acid + H(+). It catalyses the reaction a 1,2-diacyl-sn-glycero-3-phospho-(1D-myo-inositol) + H2O = a 2-acyl-sn-glycero-3-phospho-D-myo-inositol + a fatty acid + H(+). The enzyme catalyses 1-octadecanoyl-2-(5Z,8Z,11Z,14Z-eicosatetraenoyl)-sn-glycero-3-phospho-(1D-myo-inositol) + H2O = 2-(5Z,8Z,11Z,14Z-eicosatetraenoyl)-sn-glycero-3-phospho-(1D-myo-inositol) + octadecanoate + H(+). It carries out the reaction a 1-acyl-2-(5Z,8Z,11Z,14Z-eicosatetraenoyl)-sn-glycero-3-phospho-(1D-myo-inositol) + H2O = 2-(5Z,8Z,11Z,14Z-eicosatetraenoyl)-sn-glycero-3-phospho-(1D-myo-inositol) + a fatty acid + H(+). The catalysed reaction is 1,2-dihexadecanoyl-sn-glycero-3-phospho-(1D-myo-inositol) + H2O = 2-hexadecanoyl-sn-glycero-3-phospho-(1D-myo-inositol) + hexadecanoate + H(+). It catalyses the reaction 1,2-di-(9Z-octadecenoyl)-sn-glycero-3-phosphate + H2O = 2-(9Z-octadecenoyl)-sn-glycero-3-phosphate + (9Z)-octadecenoate + H(+). The enzyme catalyses a 1-acyl-2-(5Z,8Z,11Z,14Z)-eicosatetraenoyl-sn-glycero-3-phosphate + H2O = 2-(5Z,8Z,11Z,14Z-eicosatetraenoyl)-sn-glycero-3-phosphate + a fatty acid + H(+). It carries out the reaction 1-hexadecanoyl-2-(9Z-octadecenoyl)-sn-glycero-3-phosphate + H2O = 2-(9Z-octadecenoyl)-sn-glycero-3-phosphate + hexadecanoate + H(+). The catalysed reaction is 1-hexadecanoyl-2-(9Z-octadecenoyl)-sn-glycero-3-phospho-L-serine + H2O = 2-(9Z-octadecenoyl)-sn-glycero-3-phospho-L-serine + hexadecanoate + H(+). It catalyses the reaction 1,2-di-(5Z,8Z,11Z,14Z)-eicosatetraenoyl-sn-glycero-3-phosphate + H2O = 2-(5Z,8Z,11Z,14Z-eicosatetraenoyl)-sn-glycero-3-phosphate + (5Z,8Z,11Z,14Z)-eicosatetraenoate + H(+). The enzyme catalyses 1-octadecanoyl-2-(5Z,8Z,11Z,14Z-eicosatetraenoyl)-sn-glycero-3-phosphate + H2O = 2-(5Z,8Z,11Z,14Z-eicosatetraenoyl)-sn-glycero-3-phosphate + octadecanoate + H(+). It carries out the reaction a 1,2-diacyl-sn-glycero-3-phosphocholine + H2O = a 2-acyl-sn-glycero-3-phosphocholine + a fatty acid + H(+). The catalysed reaction is a 1,2-diacyl-sn-glycero-3-phosphoethanolamine + H2O = a 2-acyl-sn-glycero-3-phosphoethanolamine + a fatty acid + H(+). It catalyses the reaction a 1,2-diacyl-sn-glycero-3-phospho-L-serine + H2O = a 2-acyl-sn-glycero-3-phospho-L-serine + a fatty acid + H(+). The enzyme catalyses a 1,2-diacyl-sn-glycero-3-phospho-(1'-sn-glycerol) + H2O = 2-acyl-sn-glycero-3-phospho-(1'-sn-glycerol) + a fatty acid + H(+). It carries out the reaction 1-hexadecanoyl-2-(9Z-octadecenoyl)-sn-glycero-3-phospho-(1'-sn-glycerol) + H2O = 2-(9Z-octadecenoyl)-sn-glycero-3-phospho-(1'-sn-glycerol) + hexadecanoate + H(+). The catalysed reaction is 1-acyl-2-(5Z,8Z,11Z,14Z-eicosatetraenoyl)-sn-glycero-3-phosphocholine + H2O = 2-(5Z,8Z,11Z,14Z)-eicosatetraenoyl-sn-glycero-3-phosphocholine + a fatty acid + H(+). It catalyses the reaction 1-acyl-2-(5Z,8Z,11Z,14Z)-eicosatetraenoyl-sn-glycero-3-phosphoethanolamine + H2O = 2-(5Z,8Z,11Z,14Z)-eicosatetraenoyl-sn-glycero-3-phosphoethanolamine + a fatty acid + H(+). The enzyme catalyses 1-(9Z-octadecenoyl)-2-(7Z,10Z,13Z,16Z,19Z-docosapentaenoyl)-sn-glycero-3-phospho-1D-myo-inositol + H2O = 2-(7Z,10Z,13Z,16Z,19Z-docosapentaenoyl)-sn-glycero-3-phospho-1D-myo-inositol + (9Z)-octadecenoate + H(+). It carries out the reaction 1-(9Z-octadecenoyl)-2-(5Z,8Z,11Z,14Z-eicosatetraenoyl)-sn-glycero-3-phospho-1D-myo-inositol + H2O = 2-(5Z,8Z,11Z,14Z-eicosatetraenoyl)-sn-glycero-3-phospho-(1D-myo-inositol) + (9Z)-octadecenoate + H(+). The catalysed reaction is 1,2-di-(9Z-octadecenoyl)-sn-glycero-3-phospho-1D-myo-inositol + H2O = 2-(9Z-octadecenoyl)-sn-glycero-3-phospho-1D-myo-inositol + (9Z)-octadecenoate + H(+). It catalyses the reaction 1-(9Z-octadecenoyl)-2-(8Z,11Z,14Z-eicosatrienoyl)-sn-glycero-3-phospho-1D-myo-inositol + H2O = 2-(8Z,11Z,14Z-eicosatrienoyl)-sn-glycero-3-phospho-1D-myo-inositol + (9Z)-octadecenoate + H(+). The enzyme catalyses 1,2-di-(9Z-octadecenoyl)-sn-glycero-3-phosphocholine + H2O = (9Z-octadecenoyl)-sn-glycero-3-phosphocholine + (9Z)-octadecenoate + H(+). It participates in phospholipid metabolism; phosphatidylinositol metabolism. Its function is as follows. Phospholipase A1 (PLA1) that hydrolyzes ester bonds at the sn-1 position of glycerophospholipids producing a free fatty acid and a lysophospholipid. Prefers phosphatidate (1,2-diacyl-sn-glycero-3-phosphate, PA) as substrate in vitro, but can efficiently hydrolyze phosphatidylinositol (1,2-diacyl-sn-glycero-3-phospho-(1D-myo-inositol), PI), as well as a range of other glycerophospholipid substrates such as phosphatidylcholine (1,2-diacyl-sn-glycero-3-phosphocholine, PC), phosphatidylethanolamine (1,2-diacyl-sn-glycero-3-phosphoethanolamine, PE), phosphatidylserine (1,2-diacyl-sn-glycero-3-phospho-L-serine, PS) and phosphatidylglycerol (1,2-diacyl-sn-glycero-3-phospho-(1'-sn-glycerol), PG). Involved in the regulation of the endogenous content of polyunsaturated PI and PS lipids in the nervous system. Changes in these lipids extend to downstream metabolic products like PI phosphates PIP and PIP2, which play fundamental roles in cell biology. Regulates mitochondrial morphology. These dynamic changes may be due to PA hydrolysis at the mitochondrial surface. May play a regulatory role in spermatogenesis or sperm function. The chain is Phospholipase DDHD1 (DDHD1) from Bos taurus (Bovine).